The chain runs to 303 residues: Protoheme IX farnesyltransferase 2 (303 aa).

9 consecutive transmembrane segments (helical) span residues 29–49 (VVAL…PGIV), 51–71 (LQPL…AAAF), 96–118 (ISTT…VLYT), 123–143 (LTAW…TAYL), 150–170 (NIVI…TAIT), 177–197 (ALLL…ALAI), 223–243 (CILL…LVGM), 244–264 (CGPI…YKAW), and 281–301 (FSIY…YFWV).

This sequence belongs to the UbiA prenyltransferase family. Protoheme IX farnesyltransferase subfamily.

It is found in the cell inner membrane. The catalysed reaction is heme b + (2E,6E)-farnesyl diphosphate + H2O = Fe(II)-heme o + diphosphate. The protein operates within porphyrin-containing compound metabolism; heme O biosynthesis; heme O from protoheme: step 1/1. Its function is as follows. Converts heme B (protoheme IX) to heme O by substitution of the vinyl group on carbon 2 of heme B porphyrin ring with a hydroxyethyl farnesyl side group. The sequence is that of Protoheme IX farnesyltransferase 2 from Shewanella frigidimarina (strain NCIMB 400).